The chain runs to 188 residues: MTDDLEPTAPAAAAPEPEVKGIDLARRALEEARAAAKASGKSVGQGRRSGTGVRALRARRRRGWSGPGPDDRDPQPFGALTNAIAKQRGWSPKVSEGTVLGRWVQVVGEDIAAHAEPTGLRDGILSVSAESTAWATQLRMMQSQILAKIAAAVGDGVVKSLRITGPTAPSWRKGERHIRGRGPRDTYG.

3 disordered regions span residues 1–20 (MTDD…PEVK), 31–78 (EARA…QPFG), and 166–188 (PTAP…DTYG). Low complexity predominate over residues 7–16 (PTAPAAAAPE).

It belongs to the UPF0232 family.

In Rhodococcus jostii (strain RHA1), this protein is UPF0232 protein RHA1_ro03670.